Reading from the N-terminus, the 142-residue chain is Small ribosomal subunit protein bS6 (142 aa).

The tract at residues 110–142 (NKKPSHAKEKHEKTEHAHSHHTEEAGSKESHSE) is disordered.

The protein belongs to the bacterial ribosomal protein bS6 family.

Its function is as follows. Binds together with bS18 to 16S ribosomal RNA. This is Small ribosomal subunit protein bS6 from Helicobacter acinonychis (strain Sheeba).